The sequence spans 364 residues: Aspartate aminotransferase (364 aa).

L-aspartate is bound by residues glycine 23, tryptophan 99, and asparagine 143. The residue at position 200 (lysine 200) is an N6-(pyridoxal phosphate)lysine. Arginine 320 serves as a coordination point for L-aspartate.

Belongs to the class-I pyridoxal-phosphate-dependent aminotransferase family. As to quaternary structure, homodimer. Pyridoxal 5'-phosphate serves as cofactor.

The protein resides in the cytoplasm. The enzyme catalyses L-aspartate + 2-oxoglutarate = oxaloacetate + L-glutamate. This chain is Aspartate aminotransferase (aspC), found in Thermococcus kodakarensis (strain ATCC BAA-918 / JCM 12380 / KOD1) (Pyrococcus kodakaraensis (strain KOD1)).